Consider the following 176-residue polypeptide: NAD(P)H-quinone oxidoreductase subunit 6, chloroplastic (176 aa).

Helical transmembrane passes span 10–30 (FLLV…VLLP), 32–52 (PIFS…LYIL), 61–81 (AQLL…VMFM), 92–112 (LWTV…FLLM), and 152–172 (FFLP…GAIS).

The protein belongs to the complex I subunit 6 family. NDH is composed of at least 16 different subunits, 5 of which are encoded in the nucleus.

It localises to the plastid. It is found in the chloroplast thylakoid membrane. The enzyme catalyses a plastoquinone + NADH + (n+1) H(+)(in) = a plastoquinol + NAD(+) + n H(+)(out). It carries out the reaction a plastoquinone + NADPH + (n+1) H(+)(in) = a plastoquinol + NADP(+) + n H(+)(out). Its function is as follows. NDH shuttles electrons from NAD(P)H:plastoquinone, via FMN and iron-sulfur (Fe-S) centers, to quinones in the photosynthetic chain and possibly in a chloroplast respiratory chain. The immediate electron acceptor for the enzyme in this species is believed to be plastoquinone. Couples the redox reaction to proton translocation, and thus conserves the redox energy in a proton gradient. In Capsella bursa-pastoris (Shepherd's purse), this protein is NAD(P)H-quinone oxidoreductase subunit 6, chloroplastic (ndhG).